A 187-amino-acid polypeptide reads, in one-letter code: RNA 2',3'-cyclic phosphodiesterase (187 aa).

Residue H40 is the Proton donor of the active site. Short sequence motifs (HXTX) lie at residues 40–43 (HLTL) and 125–128 (HITI). H125 serves as the catalytic Proton acceptor.

The protein belongs to the 2H phosphoesterase superfamily. ThpR family.

It carries out the reaction a 3'-end 2',3'-cyclophospho-ribonucleotide-RNA + H2O = a 3'-end 2'-phospho-ribonucleotide-RNA + H(+). In terms of biological role, hydrolyzes RNA 2',3'-cyclic phosphodiester to an RNA 2'-phosphomonoester. The sequence is that of RNA 2',3'-cyclic phosphodiesterase from Thermotoga maritima (strain ATCC 43589 / DSM 3109 / JCM 10099 / NBRC 100826 / MSB8).